We begin with the raw amino-acid sequence, 487 residues long: 3-octaprenyl-4-hydroxybenzoate carboxy-lyase (487 aa).

Asparagine 172 provides a ligand contact to Mn(2+). Prenylated FMN contacts are provided by residues isoleucine 175–arginine 177, arginine 189–leucine 191, and arginine 194–glycine 195. Residue glutamate 238 participates in Mn(2+) binding. Residue aspartate 287 is the Proton donor of the active site.

Belongs to the UbiD family. Homohexamer. Prenylated FMN is required as a cofactor. It depends on Mn(2+) as a cofactor.

It localises to the cell membrane. The catalysed reaction is a 4-hydroxy-3-(all-trans-polyprenyl)benzoate + H(+) = a 2-(all-trans-polyprenyl)phenol + CO2. The protein operates within cofactor biosynthesis; ubiquinone biosynthesis. Its function is as follows. Catalyzes the decarboxylation of 3-octaprenyl-4-hydroxy benzoate to 2-octaprenylphenol, an intermediate step in ubiquinone biosynthesis. This chain is 3-octaprenyl-4-hydroxybenzoate carboxy-lyase, found in Nitrosomonas europaea (strain ATCC 19718 / CIP 103999 / KCTC 2705 / NBRC 14298).